The chain runs to 436 residues: 5-methylthioadenosine/S-adenosylhomocysteine deaminase (436 aa).

The Zn(2+) site is built by H66 and H68. Substrate is bound by residues E95, R147, R161, and H187. H214 provides a ligand contact to Zn(2+). Residues E217 and D303 each coordinate substrate. D303 provides a ligand contact to Zn(2+).

This sequence belongs to the metallo-dependent hydrolases superfamily. MTA/SAH deaminase family. It depends on Zn(2+) as a cofactor.

The catalysed reaction is S-adenosyl-L-homocysteine + H2O + H(+) = S-inosyl-L-homocysteine + NH4(+). The enzyme catalyses S-methyl-5'-thioadenosine + H2O + H(+) = S-methyl-5'-thioinosine + NH4(+). Its function is as follows. Catalyzes the deamination of 5-methylthioadenosine and S-adenosyl-L-homocysteine into 5-methylthioinosine and S-inosyl-L-homocysteine, respectively. Is also able to deaminate adenosine. This chain is 5-methylthioadenosine/S-adenosylhomocysteine deaminase, found in Symbiobacterium thermophilum (strain DSM 24528 / JCM 14929 / IAM 14863 / T).